The following is a 1134-amino-acid chain: Ankyrin repeat and SAM domain-containing protein 1A (1134 aa).

Position 2 is an N-acetylglycine (glycine 2). The span at glycine 33 to glycine 55 shows a compositional bias: gly residues. Residues glycine 33–serine 57 are disordered. ANK repeat units follow at residues threonine 79 to valine 108, lysine 112 to arginine 141, aspartate 148 to methionine 177, lysine 181 to serine 210, lysine 214 to tyrosine 243, and glutamate 246 to isoleucine 275. Positions histidine 305–lysine 317 are enriched in basic and acidic residues. 3 disordered regions span residues histidine 305 to glycine 338, serine 375 to histidine 422, and valine 469 to glutamine 498. Threonine 318 bears the Phosphothreonine mark. Polar residues predominate over residues serine 328 to glutamine 337. The segment covering serine 382–glutamate 392 has biased composition (basic and acidic residues). Serine 507 is subject to Phosphoserine. A disordered region spans residues leucine 569–asparagine 650. The span at leucine 572–alanine 588 shows a compositional bias: polar residues. Basic and acidic residues predominate over residues proline 613–serine 628. Phosphoserine is present on residues serine 620, serine 622, serine 624, serine 626, serine 628, serine 647, serine 661, serine 663, serine 666, and serine 677. The segment covering cysteine 633–asparagine 650 has biased composition (polar residues). 2 consecutive SAM domains span residues threonine 696–valine 762 and asparagine 770–proline 837. Residues threonine 856–glycine 868 are compositionally biased toward polar residues. Disordered stretches follow at residues threonine 856–arginine 896 and alanine 1079–asparagine 1134. Residue serine 887 is modified to Phosphoserine. In terms of domain architecture, PID spans isoleucine 936–proline 1091. A compositionally biased stretch (basic and acidic residues) spans proline 1123–asparagine 1134.

As to quaternary structure, interacts (via SAM domain) with EPHA2 (via SAM domain). Interacts with EPHA8; EPHA8 kinase activity-independent but stimulated by EPHA8 ubiquitination. Interacts (via SAM domain) with EPHA6 (via SAM domain). Phosphorylated on tyrosine residues in response to EGF and PDGF. In terms of tissue distribution, widely expressed (at protein level).

The protein resides in the cytoplasm. It is found in the cell projection. Regulator of different signaling pathways. Regulates EPHA8 receptor tyrosine kinase signaling to control cell migration and neurite retraction. This Homo sapiens (Human) protein is Ankyrin repeat and SAM domain-containing protein 1A (ANKS1A).